The chain runs to 218 residues: ATP phosphoribosyltransferase (218 aa).

It belongs to the ATP phosphoribosyltransferase family. Short subfamily. In terms of assembly, heteromultimer composed of HisG and HisZ subunits.

It is found in the cytoplasm. It catalyses the reaction 1-(5-phospho-beta-D-ribosyl)-ATP + diphosphate = 5-phospho-alpha-D-ribose 1-diphosphate + ATP. It functions in the pathway amino-acid biosynthesis; L-histidine biosynthesis; L-histidine from 5-phospho-alpha-D-ribose 1-diphosphate: step 1/9. Functionally, catalyzes the condensation of ATP and 5-phosphoribose 1-diphosphate to form N'-(5'-phosphoribosyl)-ATP (PR-ATP). Has a crucial role in the pathway because the rate of histidine biosynthesis seems to be controlled primarily by regulation of HisG enzymatic activity. This is ATP phosphoribosyltransferase from Trichormus variabilis (strain ATCC 29413 / PCC 7937) (Anabaena variabilis).